Reading from the N-terminus, the 505-residue chain is Salutaridine synthase (505 aa).

The helical transmembrane segment at 10–30 threads the bilayer; that stretch reads DFWMIACTVIIVFALVKFMFS. Heme is bound at residue Cys444.

This sequence belongs to the cytochrome P450 family. Heme serves as cofactor.

The protein localises to the endoplasmic reticulum membrane. It carries out the reaction (R)-reticuline + reduced [NADPH--hemoprotein reductase] + O2 = salutaridine + oxidized [NADPH--hemoprotein reductase] + 2 H2O + H(+). Its function is as follows. Cytochrome P450 monooxygenase involved in biosynthesis of morphinan-type benzylisoquinoline and opiate alkaloids natural products. Catalyzes the formation of the morphinan alkaloid salutaridine by intramolecular phenol oxidation of (R)-reticuline without the incorporation of oxygen into the product. Can also use (R)-norreticuline as substrate. The polypeptide is Salutaridine synthase (Papaver somniferum (Opium poppy)).